Here is a 274-residue protein sequence, read N- to C-terminus: Thiamine kinase (274 aa).

The protein belongs to the thiamine kinase family.

The catalysed reaction is thiamine + ATP = thiamine phosphate + ADP + H(+). The protein operates within cofactor biosynthesis; thiamine diphosphate biosynthesis; thiamine phosphate from thiamine: step 1/1. In terms of biological role, catalyzes the ATP-dependent phosphorylation of thiamine to thiamine phosphate. Is involved in thiamine salvage. The chain is Thiamine kinase from Salmonella gallinarum (strain 287/91 / NCTC 13346).